We begin with the raw amino-acid sequence, 41 residues long: MRDLKTYLSVAPVLSTLWFGALAGLLIEINRFFPDALTLSL.

The helical transmembrane segment at 7–27 (YLSVAPVLSTLWFGALAGLLI) threads the bilayer.

This sequence belongs to the PsaJ family.

It is found in the plastid. It localises to the chloroplast thylakoid membrane. May help in the organization of the PsaE and PsaF subunits. The chain is Photosystem I reaction center subunit IX from Jasminum nudiflorum (Winter jasmine).